A 565-amino-acid polypeptide reads, in one-letter code: Arginine--tRNA ligase (565 aa).

The short motif at 120–130 (PNIAKPFHVGH) is the 'HIGH' region element.

The protein belongs to the class-I aminoacyl-tRNA synthetase family. As to quaternary structure, monomer.

The protein localises to the cytoplasm. The catalysed reaction is tRNA(Arg) + L-arginine + ATP = L-arginyl-tRNA(Arg) + AMP + diphosphate. The protein is Arginine--tRNA ligase of Clostridium perfringens (strain 13 / Type A).